Here is a 573-residue protein sequence, read N- to C-terminus: Glucocorticoid modulatory element-binding protein 1 (573 aa).

The residue at position 2 (alanine 2) is an N-acetylalanine. An SAND domain is found at 82–166; sequence TGTIEANEDM…RKMMDSGQID (85 aa). Residue cysteine 113 participates in Zn(2+) binding. DNA contacts are provided by lysine 139, lysine 143, lysine 146, and arginine 157. Residues histidine 170, cysteine 174, and cysteine 178 each coordinate Zn(2+). Residues 321–367 adopt a coiled-coil conformation; that stretch reads LDNRRNQVEQGEEQFLYTLTDLERQLEEQKKQGQDHRLKSQTVQNVV. A disordered region spans residues 370–398; it reads PVSTPKPPKRPRLQRPASTTVLSPSPPVQ.

In terms of assembly, homodimer, and heterodimer of GMEB1 and GMEB2. GMEB1 and GMEB2 form the parvovirus initiator complex (PIF). Interacts with the glucocorticoid receptor (NR3C1) and NCOA2/TIF2. May interact with HSP27 and CREB-binding protein (CBP).

The protein localises to the nucleus. It localises to the cytoplasm. Functionally, trans-acting factor that binds to glucocorticoid modulatory elements (GME) present in the TAT (tyrosine aminotransferase) promoter and increases sensitivity to low concentrations of glucocorticoids. Also binds to the transferrin receptor promoter. Essential auxiliary factor for the replication of parvoviruses. This chain is Glucocorticoid modulatory element-binding protein 1 (GMEB1), found in Homo sapiens (Human).